Reading from the N-terminus, the 217-residue chain is Replication-associated protein A (217 aa).

Residues 1-17 show a composition bias toward low complexity; that stretch reads MRAPASSAASNRPGPSN. A disordered region spans residues 1–22; sequence MRAPASSAASNRPGPSNHPTPR. A CRESS-DNA virus Rep endonuclease domain is found at 22-125; the sequence is RWNSKQFFLT…NGDSDEMGEL (104 aa). An RCR-1 motif is present at residues 29–32; sequence FLTY. 3 residues coordinate a divalent metal cation: glutamate 63, histidine 71, and histidine 73. The RCR-2 signature appears at 71–73; the sequence is HLH. Tyrosine 111 functions as the For DNA cleavage activity in the catalytic mechanism. The RCR-3 motif lies at 111–114; it reads YISK. An oligomerization region spans residues 176 to 188; the sequence is SAAALFTEPPPVY.

It belongs to the geminiviridae Rep protein family. Homooligomer. Part of the C- and V-complexes which are RepA-Rep-DNA complexes involved in the c-sense and v-sense transcription.

Its subcellular location is the host nucleus. It localises to the host cytoplasm. Functionally, implicated in enhancement of V-sense gene expression. Acts a an inhibitor of C-sense gene transcription. This is Replication-associated protein A from Miscanthus sacchariflorus (MiSV).